The chain runs to 249 residues: DNA polymerase sliding clamp (249 aa).

It belongs to the PCNA family. Homotrimer. The subunits circularize to form a toroid; DNA passes through its center. Replication factor C (RFC) is required to load the toroid on the DNA.

In terms of biological role, sliding clamp subunit that acts as a moving platform for DNA processing. Responsible for tethering the catalytic subunit of DNA polymerase and other proteins to DNA during high-speed replication. This is DNA polymerase sliding clamp from Pyrococcus horikoshii (strain ATCC 700860 / DSM 12428 / JCM 9974 / NBRC 100139 / OT-3).